The following is a 1461-amino-acid chain: Pleiotropic drug resistance protein 2 (1461 aa).

Positions 172–445 constitute an ABC transporter 1 domain; it reads LGLIHLSPSK…FEYMGFRCPE (274 aa). 205–212 is an ATP binding site; that stretch reads GPPGSGKT. One can recognise an ABC transmembrane type-2 1 domain in the interval 523–736; sequence ELFKSCFTRE…GQNAIAINEF (214 aa). Helical transmembrane passes span 541–561, 577–597, 622–642, 660–680, 685–705, and 771–791; these read FLYI…LTVF, FWGA…QELA, LPIW…WIIL, LLAF…IAAA, VVAN…GGFI, and ISIG…IAAL. One can recognise an ABC transporter 2 domain in the interval 859–1111; sequence LAFNHVNYYV…KLVEYFETIP (253 aa). 904–911 serves as a coordination point for ATP; that stretch reads GVSGAGKT. One can recognise an ABC transmembrane type-2 2 domain in the interval 1184–1398; sequence TQCKACFWKQ…TIYGIFASQV (215 aa). 7 helical membrane-spanning segments follow: residues 1203–1223, 1243–1263, 1291–1311, 1321–1341, 1348–1368, 1379–1399, and 1430–1450; these read YNAI…VIFW, YAAV…VVAI, TIYV…MIGY, FYYF…MVVA, IAAI…GFLI, WYYW…SQVG, and FLLV…FVFA.

It belongs to the ABC transporter superfamily. ABCG family. PDR (TC 3.A.1.205) subfamily.

The protein resides in the membrane. Functionally, may be a general defense protein. The polypeptide is Pleiotropic drug resistance protein 2 (PDR2) (Nicotiana plumbaginifolia (Leadwort-leaved tobacco)).